The sequence spans 253 residues: Triosephosphate isomerase (253 aa).

8 to 10 (NWK) contributes to the substrate binding site. Histidine 93 serves as the catalytic Electrophile. Glutamate 165 (proton acceptor) is an active-site residue. Substrate is bound by residues glycine 171, serine 210, and 231-232 (GG).

Belongs to the triosephosphate isomerase family. Homodimer.

It is found in the cytoplasm. The enzyme catalyses D-glyceraldehyde 3-phosphate = dihydroxyacetone phosphate. The protein operates within carbohydrate biosynthesis; gluconeogenesis. Its pathway is carbohydrate degradation; glycolysis; D-glyceraldehyde 3-phosphate from glycerone phosphate: step 1/1. Involved in the gluconeogenesis. Catalyzes stereospecifically the conversion of dihydroxyacetone phosphate (DHAP) to D-glyceraldehyde-3-phosphate (G3P). The protein is Triosephosphate isomerase of Francisella philomiragia subsp. philomiragia (strain ATCC 25017 / CCUG 19701 / FSC 153 / O#319-036).